An 89-amino-acid polypeptide reads, in one-letter code: Small ribosomal subunit protein uS14A (89 aa).

Belongs to the universal ribosomal protein uS14 family. In terms of assembly, part of the 30S ribosomal subunit. Contacts proteins S3 and S10.

Functionally, binds 16S rRNA, required for the assembly of 30S particles and may also be responsible for determining the conformation of the 16S rRNA at the A site. In Listeria innocua serovar 6a (strain ATCC BAA-680 / CLIP 11262), this protein is Small ribosomal subunit protein uS14A.